The chain runs to 113 residues: Large ribosomal subunit protein bL17 (113 aa).

Belongs to the bacterial ribosomal protein bL17 family. Part of the 50S ribosomal subunit. Contacts protein L32.

The protein is Large ribosomal subunit protein bL17 of Caldicellulosiruptor saccharolyticus (strain ATCC 43494 / DSM 8903 / Tp8T 6331).